Here is a 427-residue protein sequence, read N- to C-terminus: Interferon regulatory factor 3 (427 aa).

Position 3 is a phosphothreonine (threonine 3). The segment at residues 5–111 is a DNA-binding region (IRF tryptophan pentad repeat); the sequence is KPRILPWLVS…DPHKIYEFVN (107 aa). Residue serine 14 is modified to Phosphoserine. Residue threonine 75 is modified to Phosphothreonine. Basic and acidic residues predominate over residues 91-107; that stretch reads RLAEDRSKDPHDPHKIY. The segment at 91 to 136 is disordered; the sequence is RLAEDRSKDPHDPHKIYEFVNSGVGDFSQPDTSPDTNGGGSTSDTQ. 2 positions are modified to phosphoserine: serine 97 and serine 123. The Nuclear export signal motif lies at 139–149; sequence ILDELLGNMVL. The tract at residues 141–427 is mediates interaction with ZDHHC11; sequence DELLGNMVLA…GMDFQGPGES (287 aa). Position 175 is a (Microbial infection) Phosphoserine (serine 175). Residue threonine 180 is modified to Phosphothreonine. Residue serine 188 is modified to Phosphoserine. A Glycyl lysine isopeptide (Lys-Gly) (interchain with G-Cter in ISG15) cross-link involves residue lysine 193. Residues 200 to 360 form an interaction with HERC5 region; the sequence is EEWEFEVTAF…SWPQDQPWTK (161 aa). Residues threonine 237, threonine 244, and threonine 253 each carry the phosphothreonine modification. The cysteines at positions 267 and 289 are disulfide-linked. Glycyl lysine isopeptide (Lys-Gly) (interchain with G-Cter in ISG15) cross-links involve residues lysine 360 and lysine 366. Lysine 366 carries the post-translational modification N6-acetyllysine. Phosphoserine is present on serine 385. Position 386 is a diphosphoserine (serine 386). Position 386 is a phosphoserine; by TBK1 (serine 386). Serine 396 is modified (phosphoserine; by IKKE and TBK1). At serine 398 the chain carries Phosphoserine. Position 404 is a phosphothreonine (threonine 404). Phosphoserine is present on serine 427.

The protein belongs to the IRF family. Monomer. Homodimer; phosphorylation-induced. Interacts (when phosphorylated) with CREBBP. Interacts with MAVS (via phosphorylated pLxIS motif). Interacts with TICAM1 (via phosphorylated pLxIS motif). Interacts with STING1 (via phosphorylated pLxIS motif). Interacts with IKBKE and TBK1. Interacts with TICAM2. Interacts with RBCK1. Interacts with HERC5. Interacts with DDX3X (phosphorylated at 'Ser-102'); the interaction allows the phosphorylation and activation of IRF3 by IKBKE. Interacts with TRIM21 and ULK1, in the presence of TRIM21; this interaction leads to IRF3 degradation by autophagy. Interacts with RIOK3; RIOK3 probably mediates the interaction of TBK1 with IRF3. Interacts with ILRUN; the interaction inhibits IRF3 binding to its DNA consensus sequence. Interacts with LYAR; this interaction impairs IRF3 DNA-binding activity. Interacts with TRAF3. Interacts with ZDHHC11; ZDHHC11 recruits IRF3 to STING1 upon DNA virus infection and thereby promotes IRF3 activation. Interacts with HSP90AA1; the interaction mediates IRF3 association with TOMM70. Interacts with BCL2; the interaction decreases upon Sendai virus infection. Interacts with BAX; the interaction is direct, increases upon Sendai virus infection and mediates the formation of the apoptosis complex TOMM70:HSP90AA1:IRF3:BAX. Interacts with DDX56. Interacts with NBR1. In terms of assembly, (Microbial infection) Interacts with rotavirus A NSP1 (via pLxIS motif); this interaction leads to the proteasome-dependent degradation of IRF3. As to quaternary structure, (Microbial infection) Interacts with herpes virus 8/HHV-8 protein VIRF1. (Microbial infection) Interacts with Seneca Valley virus protease 3C; this interaction is involved in the suppression of IRF3 expression and phosphorylation by the virus. In terms of assembly, (Microbial infection) Interacts with herpes virus 2/HHV-2 protein ICP27; this interaction inhibits IRF3 phosphorylation and nuclear translocation. As to quaternary structure, (Microbial infection) Interacts with human cytomegalovirus protein UL44; this interaction prevents IRF3 binding to its promoters. (Microbial infection) Interacts with the two fragments of MERS-COV protein N produced by CASP6 through proteolytic cleavage; both interactions inhibit IRF3 nuclear translocation after activation and IFN signaling. Constitutively phosphorylated on many Ser/Thr residues. Activated following phosphorylation by TBK1 and IKBKE. Innate adapter proteins, such as MAVS, STING1 or TICAM1, are first activated by viral RNA, cytosolic DNA, and bacterial lipopolysaccharide (LPS), respectively, leading to activation of the kinases TBK1 and IKBKE. These kinases then phosphorylate the adapter proteins on the pLxIS motif, leading to recruitment of IRF3, thereby licensing IRF3 for phosphorylation by TBK1. Phosphorylation at Ser-386 is followed by pyrophosphorylation at the same residue, promoting phosphorylation at Ser-396. Phosphorylated IRF3 dissociates from the adapter proteins, dimerizes, and then enters the nucleus to induce IFNs. Post-translationally, pyrophosphorylated by UAP1 following phosphorylation at Ser-386 by TBK1. Pyrophosphorylation promotes subsequent phosphorylation at Ser-396, leading to homodimerization of IRF3. In terms of processing, acetylation at Lys-366 by KAT8 inhibits recruimtent to promoters and transcription factor activity. Acetylation by KAT8 is promoted by phosphorylation at Ser-396. Ubiquitinated; ubiquitination involves RBCK1 leading to proteasomal degradation. Polyubiquitinated; ubiquitination involves TRIM21 leading to proteasomal degradation. Ubiquitinated by UBE3C, leading to its degradation. Deubiquitinated by USP5 on both 'Lys-48'-linked unanchored and 'Lys-63'-linked anchored polyubiquitin, leading to inhibition of anti-RNA viral innate immunity. Post-translationally, ISGylated by HERC5 resulting in sustained IRF3 activation and in the inhibition of IRF3 ubiquitination by disrupting PIN1 binding. The phosphorylation state of IRF3 does not alter ISGylation. In terms of processing, proteolytically cleaved by apoptotic caspases during apoptosis, leading to its inactivation. Cleavage by CASP3 during virus-induced apoptosis inactivates it, preventing cytokine overproduction. (Microbial infection) ISGylated. ISGylation is cleaved and removed by SARS-COV-2 nsp3 which attenuates type I interferon responses. Post-translationally, (Microbial infection) Phosphorylation and subsequent activation of IRF3 is inhibited by vaccinia virus protein E3. In terms of processing, (Microbial infection) Phosphorylated by herpes simplex virus 1/HHV-1 US3 at Ser-175 to prevent IRF3 activation. As to expression, expressed constitutively in a variety of tissues.

It localises to the cytoplasm. It is found in the nucleus. The protein localises to the mitochondrion. With respect to regulation, in the absence of viral infection, maintained as a monomer in an autoinhibited state. Phosphorylation by TBK1 and IKBKE disrupts this autoinhibition leading to the liberation of the DNA-binding and dimerization activities and its nuclear localization where it can activate type I IFN and ISG genes. Phosphorylation and activation follow the following steps: innate adapter proteins, such as MAVS, STING1 or TICAM1, are first activated by viral RNA, cytosolic DNA and bacterial lipopolysaccharide (LPS), respectively, leading to activation of the kinases TBK1 and IKBKE. These kinases then phosphorylate the adapter proteins on their pLxIS motif, leading to recruitment of IRF3, thereby licensing IRF3 for phosphorylation by TBK1. Phosphorylated IRF3 dissociates from the adapter proteins, dimerizes, and then enters the nucleus to induce IFNs. Its activity is regulated as follows. (Microbial infection) Activated upon coronavirus SARS-CoV-2 infection. Its function is as follows. Key transcriptional regulator of type I interferon (IFN)-dependent immune responses which plays a critical role in the innate immune response against DNA and RNA viruses. Regulates the transcription of type I IFN genes (IFN-alpha and IFN-beta) and IFN-stimulated genes (ISG) by binding to an interferon-stimulated response element (ISRE) in their promoters. Acts as a more potent activator of the IFN-beta (IFNB) gene than the IFN-alpha (IFNA) gene and plays a critical role in both the early and late phases of the IFNA/B gene induction. Found in an inactive form in the cytoplasm of uninfected cells and following viral infection, double-stranded RNA (dsRNA), or toll-like receptor (TLR) signaling, is phosphorylated by IKBKE and TBK1 kinases. This induces a conformational change, leading to its dimerization and nuclear localization and association with CREB binding protein (CREBBP) to form dsRNA-activated factor 1 (DRAF1), a complex which activates the transcription of the type I IFN and ISG genes. Can activate distinct gene expression programs in macrophages and can induce significant apoptosis in primary macrophages. In response to Sendai virus infection, is recruited by TOMM70:HSP90AA1 to mitochondrion and forms an apoptosis complex TOMM70:HSP90AA1:IRF3:BAX inducing apoptosis. Key transcription factor regulating the IFN response during SARS-CoV-2 infection. This chain is Interferon regulatory factor 3, found in Homo sapiens (Human).